The chain runs to 454 residues: MTLNLRKVPAYLPGKVDGALTNLVHAAVDHVVPGLGKAEKAAAVYNIKQVVKKLGTYTEQGVKKIAKKTLGELGYLNYTPSSHLGMAITGRGTKQINMSRSTNAGGFALGGTTAAPVSISRNINRRSKPSIKMMGDAVVISHSEMLGAINSGTPSSNVTAFRCTGYRANPGMSTIFPWLSATAVNYEKYKFRRLSFTLVPLVSTNYSGRIGVGFDYDSSDLVPGNRQEFYALSNHCENMPWQESTVEIKCDNAYRFTGTHVAADNKLIDLGQVVVMSDSVSNGGTISAALPLFDLIVNYTVELIEPQQALFSSQLYSGSTTFTSGIPLGTGADTTTVVGPTVVNSTTVTNCVVTFKLPAGVFEVSYFIAWSTGTAAVVPTVPTTGAGSKLSNTSTGSNSYGVCFINSPVECDLLLTATVLLIIPTLPSSTCVFHAPARRCTTPMCHRLLTSLAG.

The protein belongs to the icosahedral plant coat protein family. In terms of assembly, homomultimer.

The protein localises to the virion. Its function is as follows. Capsid protein self-assembles to form an icosahedral capsid with a T=3 symmetry, about 28-34 nm in diameter, and consisting of 180 capsid proteins. This is Capsid protein from Oat chlorotic stunt virus (isolate United Kingdom) (OCSV).